Reading from the N-terminus, the 322-residue chain is Corticotropin-releasing factor-binding protein (322 aa).

The signal sequence occupies residues 1-24; that stretch reads MSPNFKLQCHFILIFLTALRGESR. Disulfide bonds link Cys-60–Cys-81, Cys-104–Cys-141, Cys-183–Cys-205, Cys-237–Cys-264, and Cys-277–Cys-318. Asn-204 is a glycosylation site (N-linked (GlcNAc...) asparagine).

Belongs to the CRF-binding protein family.

It is found in the secreted. In terms of biological role, binds CRF and inactivates it. May prevent inappropriate pituitary-adrenal stimulation in pregnancy. In Homo sapiens (Human), this protein is Corticotropin-releasing factor-binding protein (CRHBP).